Consider the following 460-residue polypeptide: MANILGAGVYSDIFFVAFKLPNLFRRIFAEGSFSQSFLPSFIRSSIKGGFASLVGLIFCGVLFMWCLLVALNPLWLTKLLAYGFDEETLKLCTPIVAINFWYLLLVFITTFLGALLQYKHSFFASAYSASLLNLCMILALLISKEKTHLEALYYLSYGVLLGGVAQILLHFYPLVKLGLWDLLFKGLLGFKTKNTNKKEYRLNRAKKDLKAFFKQFFPSVLGNSSAQIASFLDTTIASFLASGSVSYLYYANRVFQLPLALFAIAISTALFPSIAIALKNNQQDLILQRLQKAWFFLVGVLLLCSIGGIMLSKEITELLFERGQFSPKDTLITSQVFSLYLLGLLPFGLTKLFSLWLYAKLEQKKAAKISLISLFLGLAASLSLMPLLGVLGLALANSLSGLFLFVLTIKAFGFQSFLGIIKNLKSWLVILFLACVEILLLLAFKSWVTHLYLFYYFQGF.

11 helical membrane-spanning segments follow: residues isoleucine 4–phenylalanine 24, phenylalanine 50–alanine 70, isoleucine 95–leucine 115, phenylalanine 122–isoleucine 142, leucine 155–valine 175, isoleucine 228–leucine 248, leucine 257–alanine 277, lysine 292–serine 312, valine 336–tryptophan 356, alanine 366–proline 386, and leucine 428–valine 448.

It belongs to the MurJ/MviN family.

It is found in the cell inner membrane. The protein operates within cell wall biogenesis; peptidoglycan biosynthesis. Involved in peptidoglycan biosynthesis. Transports lipid-linked peptidoglycan precursors from the inner to the outer leaflet of the cytoplasmic membrane. The chain is Probable lipid II flippase MurJ from Helicobacter pylori (strain J99 / ATCC 700824) (Campylobacter pylori J99).